We begin with the raw amino-acid sequence, 540 residues long: RNA exonuclease 3 (540 aa).

A C3H1-type zinc finger spans residues 7–34 (QFKHIVCPFLRTGRKCQSRNCFFSHDFQ). Positions 382 to 529 (HCALDCELCY…EDAVSALQLV (148 aa)) constitute an Exonuclease domain.

The protein belongs to the REXO1/REXO3 family.

The protein localises to the cytoplasm. Its subcellular location is the nucleus. 3' to 5' exoribonuclease required for proper 3' end maturation of MRP RNA and of the U5L snRNA. The chain is RNA exonuclease 3 (rex3) from Schizosaccharomyces pombe (strain 972 / ATCC 24843) (Fission yeast).